The following is a 155-amino-acid chain: CASP-like protein 5B2 (155 aa).

The Cytoplasmic segment spans residues 1–18; the sequence is MWEVAWWRPGTWGGLAMR. Residues 19-39 form a helical membrane-spanning segment; the sequence is VGQVAFAGASIGVMASGAGFA. N-linked (GlcNAc...) asparagine glycosylation occurs at N40. Residues 40-43 are Extracellular-facing; sequence NYTA. The chain crosses the membrane as a helical span at residues 44–64; it reads FCYLIASMGLQSLWSLGLACL. Over 65-77 the chain is Cytoplasmic; sequence DVYALTVKRDLNN. Residues 78–98 traverse the membrane as a helical segment; it reads ALLVSLFVIGDWVTALLSFAA. Over 99–128 the chain is Extracellular; the sequence is SCSAGGVMVLFKRDVLFCRRYPQLPCGRFE. A helical transmembrane segment spans residues 129–149; that stretch reads LAVALAFLSWALSATSAIIMF. Topologically, residues 150–155 are cytoplasmic; that stretch reads CLLAAF.

This sequence belongs to the Casparian strip membrane proteins (CASP) family. As to quaternary structure, homodimer and heterodimers.

It is found in the cell membrane. The sequence is that of CASP-like protein 5B2 from Oryza sativa subsp. indica (Rice).